Consider the following 472-residue polypeptide: Cysteine--tRNA ligase (472 aa).

C28 provides a ligand contact to Zn(2+). Residues 30–40 carry the 'HIGH' region motif; the sequence is PTVYNYIHIGN. Positions 212, 237, and 241 each coordinate Zn(2+). The short motif at 271-275 is the 'KMSKS' region element; it reads KMSKS. ATP is bound at residue K274.

Belongs to the class-I aminoacyl-tRNA synthetase family. Monomer. The cofactor is Zn(2+).

The protein localises to the cytoplasm. It catalyses the reaction tRNA(Cys) + L-cysteine + ATP = L-cysteinyl-tRNA(Cys) + AMP + diphosphate. This chain is Cysteine--tRNA ligase, found in Limosilactobacillus fermentum (strain NBRC 3956 / LMG 18251) (Lactobacillus fermentum).